The primary structure comprises 336 residues: Fructose-1,6-bisphosphatase class 1 (336 aa).

Mg(2+)-binding residues include E92, D115, L117, and D118. Residues 118–121 (DGSS), N211, Y244, 262–264 (YLY), and K274 contribute to the substrate site. Position 280 (E280) interacts with Mg(2+).

Belongs to the FBPase class 1 family. As to quaternary structure, homotetramer. Mg(2+) serves as cofactor.

The protein resides in the cytoplasm. The enzyme catalyses beta-D-fructose 1,6-bisphosphate + H2O = beta-D-fructose 6-phosphate + phosphate. It functions in the pathway carbohydrate biosynthesis; gluconeogenesis. In Vibrio cholerae serotype O1 (strain ATCC 39541 / Classical Ogawa 395 / O395), this protein is Fructose-1,6-bisphosphatase class 1.